A 361-amino-acid chain; its full sequence is [LysW]-lysine hydrolase (361 aa).

A Zn(2+)-binding site is contributed by His67. Asp69 is a catalytic residue. Asp91 serves as a coordination point for Zn(2+). Glu124 (proton acceptor) is an active-site residue. Glu125, Glu148, and His326 together coordinate Zn(2+).

The protein belongs to the peptidase M20A family. LysK subfamily. Zn(2+) is required as a cofactor. Requires Co(2+) as cofactor.

The protein localises to the cytoplasm. It catalyses the reaction [amino-group carrier protein]-C-terminal-gamma-(L-lysyl)-L-glutamate + H2O = [amino-group carrier protein]-C-terminal-L-glutamate + L-lysine. It functions in the pathway amino-acid biosynthesis; L-lysine biosynthesis via AAA pathway; L-lysine from L-alpha-aminoadipate (Thermus route): step 5/5. In terms of biological role, catalyzes the release of L-lysine from [LysW]-gamma-L-lysine. This Thermus thermophilus (strain ATCC 27634 / DSM 579 / HB8) protein is [LysW]-lysine hydrolase.